Here is a 234-residue protein sequence, read N- to C-terminus: 1-(5-phosphoribosyl)-5-[(5-phosphoribosylamino)methylideneamino] imidazole-4-carboxamide isomerase (234 aa).

Asp-9 acts as the Proton acceptor in catalysis. The Proton donor role is filled by Asp-131.

The protein belongs to the HisA/HisF family.

The protein resides in the cytoplasm. It catalyses the reaction 1-(5-phospho-beta-D-ribosyl)-5-[(5-phospho-beta-D-ribosylamino)methylideneamino]imidazole-4-carboxamide = 5-[(5-phospho-1-deoxy-D-ribulos-1-ylimino)methylamino]-1-(5-phospho-beta-D-ribosyl)imidazole-4-carboxamide. The protein operates within amino-acid biosynthesis; L-histidine biosynthesis; L-histidine from 5-phospho-alpha-D-ribose 1-diphosphate: step 4/9. The polypeptide is 1-(5-phosphoribosyl)-5-[(5-phosphoribosylamino)methylideneamino] imidazole-4-carboxamide isomerase (Staphylococcus epidermidis (strain ATCC 12228 / FDA PCI 1200)).